A 527-amino-acid chain; its full sequence is Serine/threonine-protein kinase NLK (527 aa).

Sufficient for interaction with DAPK3 stretches follow at residues 1-125 (MSLC…KAHH) and 124-416 (HHHQ…SKRI). Required for interaction with TAB2 regions lie at residues 1-304 (MSLC…VVTQ) and 434-527 (YHTC…LVWE). 2 disordered regions span residues 22 to 72 (AAAA…SSAA) and 90 to 140 (QQPY…DIEP). Over residues 26–54 (GHHHHHHHHLPHLPPPHLHHHHHPQHHLH) the composition is skewed to basic residues. Positions 103–119 (PGPAAAAPAQVQAAAAA) are enriched in low complexity. The span at 122–131 (KAHHHQHSHH) shows a compositional bias: basic residues. The Protein kinase domain occupies 138 to 427 (IEPDRPIGYG…AKDALAHPYL (290 aa)). ATP contacts are provided by residues 144–152 (IGYGAFGVV) and K167. D264 serves as the catalytic Proton acceptor. T298 is subject to Phosphothreonine; by autocatalysis. The TQE signature appears at 298 to 300 (TQE). Residues 428–527 (DEGRLRYHTC…EMPPSPLVWE (100 aa)) form a required for homodimerization and kinase activation and localization to the nucleus region. S522 carries the phosphoserine modification.

The protein belongs to the protein kinase superfamily. CMGC Ser/Thr protein kinase family. MAP kinase subfamily. In terms of assembly, homodimer. Homodimerization is required for intermolecular autophosphorylation, kinase activation and nuclear localization. May interact with components of cullin-RING-based SCF (SKP1-CUL1-F-box protein) E3 ubiquitin-protein ligase complexes. Interacts with LEF1, MEF2A, MYBL1 and MYBL2. Interacts with the upstream activating kinases HIPK2 and MAP3K7/TAK1. Interaction with MAP3K7/TAK1 seems to be indirect, and may be mediated by other proteins such as STAT3, TAB1 and TAB2. Interacts with and phosphorylates a number of transcription factors including FOXO1, FOXO3, FOXO4, MYB, NOTCH1 and TCF7L2/TCF4. Interacts with DAPK3/ZIPK, and this interaction may disrupt interaction with transcription factors such as TCF7L2/TCF4. Interacts with RNF138/NARF. Interacts with ATF5; the interaction stabilizes ATF5 at the protein level in a kinase-independent manner. It depends on Mg(2+) as a cofactor. Phosphorylated on Thr-298. Intermolecular autophosphorylation on Thr-298 activates the enzyme.

The protein localises to the nucleus. It localises to the cytoplasm. It carries out the reaction L-seryl-[protein] + ATP = O-phospho-L-seryl-[protein] + ADP + H(+). The catalysed reaction is L-threonyl-[protein] + ATP = O-phospho-L-threonyl-[protein] + ADP + H(+). Activated by dimerization and subsequent intermolecular autophosphorylation on Thr-298. Activated by the non-canonical Wnt signaling pathway, in which WNT5A treatment leads to activation of MAP3K7/TAK1 and HIPK2, which subsequently phosphorylates and activates this protein. Other cytokines such as IL6 may also activate this regulatory circuit. In terms of biological role, serine/threonine-protein kinase that regulates a number of transcription factors with key roles in cell fate determination. Positive effector of the non-canonical Wnt signaling pathway, acting downstream of WNT5A, MAP3K7/TAK1 and HIPK2. Negative regulator of the canonical Wnt/beta-catenin signaling pathway. Binds to and phosphorylates TCF7L2/TCF4 and LEF1, promoting the dissociation of the TCF7L2/LEF1/beta-catenin complex from DNA, as well as the ubiquitination and subsequent proteolysis of LEF1. Together these effects inhibit the transcriptional activation of canonical Wnt/beta-catenin target genes. Negative regulator of the Notch signaling pathway. Binds to and phosphorylates NOTCH1, thereby preventing the formation of a transcriptionally active ternary complex of NOTCH1, RBPJ/RBPSUH and MAML1. Negative regulator of the MYB family of transcription factors. Phosphorylation of MYB leads to its subsequent proteolysis while phosphorylation of MYBL1 and MYBL2 inhibits their interaction with the coactivator CREBBP. Other transcription factors may also be inhibited by direct phosphorylation of CREBBP itself. Acts downstream of IL6 and MAP3K7/TAK1 to phosphorylate STAT3, which is in turn required for activation of NLK by MAP3K7/TAK1. Upon IL1B stimulus, cooperates with ATF5 to activate the transactivation activity of C/EBP subfamily members. Phosphorylates ATF5 but also stabilizes ATF5 protein levels in a kinase-independent manner. Acts as an inhibitor of the mTORC1 complex in response to osmotic stress by mediating phosphorylation of RPTOR, thereby preventing recruitment of the mTORC1 complex to lysosomes. This chain is Serine/threonine-protein kinase NLK (NLK), found in Homo sapiens (Human).